The primary structure comprises 264 residues: Cyclin-P1-1 (264 aa).

The segment at 1 to 25 (MDAAAAAGGEMSRQKATASAPPPPE) is disordered.

The protein belongs to the cyclin family. Cyclin U/P subfamily.

This chain is Cyclin-P1-1 (CYCP1-1), found in Oryza sativa subsp. japonica (Rice).